Reading from the N-terminus, the 67-residue chain is Sodium channel neurotoxin MeuNaTxalpha-10 (67 aa).

Residues 2-66 (RDGYIAKPHN…VPIRIPGKCH (65 aa)) enclose the LCN-type CS-alpha/beta domain. Disulfide bonds link Cys12–Cys65, Cys16–Cys38, Cys24–Cys48, and Cys28–Cys50. Residue Arg67 is a propeptide, removed by a carboxypeptidase.

Belongs to the long (4 C-C) scorpion toxin superfamily. Sodium channel inhibitor family. Alpha subfamily. In terms of tissue distribution, expressed by the venom gland.

The protein resides in the secreted. Alpha toxins bind voltage-independently at site-3 of sodium channels (Nav) and inhibit the inactivation of the activated channels, thereby blocking neuronal transmission. This Mesobuthus eupeus (Lesser Asian scorpion) protein is Sodium channel neurotoxin MeuNaTxalpha-10.